The following is a 92-amino-acid chain: Small ribosomal subunit protein uS19c (92 aa).

It belongs to the universal ribosomal protein uS19 family.

The protein localises to the plastid. It localises to the chloroplast. Protein S19 forms a complex with S13 that binds strongly to the 16S ribosomal RNA. The protein is Small ribosomal subunit protein uS19c of Morus indica (Mulberry).